The following is a 177-amino-acid chain: Large ribosomal subunit protein uL6 (177 aa).

The protein belongs to the universal ribosomal protein uL6 family. In terms of assembly, part of the 50S ribosomal subunit.

Its function is as follows. This protein binds to the 23S rRNA, and is important in its secondary structure. It is located near the subunit interface in the base of the L7/L12 stalk, and near the tRNA binding site of the peptidyltransferase center. The sequence is that of Large ribosomal subunit protein uL6 from Salmonella newport (strain SL254).